The primary structure comprises 192 residues: Putative manganese efflux pump MntP (192 aa).

Helical transmembrane passes span 3 to 23, 36 to 56, 65 to 85, 112 to 132, 136 to 156, and 171 to 191; these read FSAI…VAAA, VLLV…IGWL, VQAW…GKML, FVLA…LPML, FAIS…AGLF, and LAGG…HLVL.

The protein belongs to the MntP (TC 9.B.29) family.

Its subcellular location is the cell inner membrane. In terms of biological role, probably functions as a manganese efflux pump. The polypeptide is Putative manganese efflux pump MntP (Sorangium cellulosum (strain So ce56) (Polyangium cellulosum (strain So ce56))).